The following is a 237-amino-acid chain: Phosphoribosylaminoimidazole-succinocarboxamide synthase (237 aa).

The protein belongs to the SAICAR synthetase family.

It carries out the reaction 5-amino-1-(5-phospho-D-ribosyl)imidazole-4-carboxylate + L-aspartate + ATP = (2S)-2-[5-amino-1-(5-phospho-beta-D-ribosyl)imidazole-4-carboxamido]succinate + ADP + phosphate + 2 H(+). The protein operates within purine metabolism; IMP biosynthesis via de novo pathway; 5-amino-1-(5-phospho-D-ribosyl)imidazole-4-carboxamide from 5-amino-1-(5-phospho-D-ribosyl)imidazole-4-carboxylate: step 1/2. The polypeptide is Phosphoribosylaminoimidazole-succinocarboxamide synthase (Pseudomonas fluorescens (strain SBW25)).